The primary structure comprises 168 residues: Peptide deformylase 1 (168 aa).

Fe cation contacts are provided by Cys-91 and His-133. Residue Glu-134 is part of the active site. Residue His-137 coordinates Fe cation.

Belongs to the polypeptide deformylase family. It depends on Fe(2+) as a cofactor.

It carries out the reaction N-terminal N-formyl-L-methionyl-[peptide] + H2O = N-terminal L-methionyl-[peptide] + formate. Removes the formyl group from the N-terminal Met of newly synthesized proteins. Requires at least a dipeptide for an efficient rate of reaction. N-terminal L-methionine is a prerequisite for activity but the enzyme has broad specificity at other positions. This Vibrio vulnificus (strain YJ016) protein is Peptide deformylase 1.